Consider the following 895-residue polypeptide: Tiger protein D1 (895 aa).

An N-terminal signal peptide occupies residues M1–S21. Over A22 to G861 the chain is Extracellular. N-linked (GlcNAc...) asparagine glycans are attached at residues N29, N52, N171, N181, N253, N257, N277, N288, N351, N368, N407, N428, N451, N481, N507, N521, N573, N583, N593, N623, N652, N685, N720, N757, N766, N780, and N799. The IPT/TIG 1 domain maps to A295–Y381. IPT/TIG domains are found at residues P560–L638 and P642–Y725. Residues A862–F882 traverse the membrane as a helical segment. Over Y883–N895 the chain is Cytoplasmic.

The protein resides in the cell membrane. In terms of biological role, may be involved in the regulation of aggregation. Activates tgrC1. The polypeptide is Tiger protein D1 (tgrD1) (Dictyostelium discoideum (Social amoeba)).